The sequence spans 235 residues: Putative N-acetylmannosamine-6-phosphate 2-epimerase (235 aa).

This sequence belongs to the NanE family.

It catalyses the reaction an N-acyl-D-glucosamine 6-phosphate = an N-acyl-D-mannosamine 6-phosphate. It functions in the pathway amino-sugar metabolism; N-acetylneuraminate degradation; D-fructose 6-phosphate from N-acetylneuraminate: step 3/5. Converts N-acetylmannosamine-6-phosphate (ManNAc-6-P) to N-acetylglucosamine-6-phosphate (GlcNAc-6-P). The protein is Putative N-acetylmannosamine-6-phosphate 2-epimerase of Photobacterium profundum (strain SS9).